The chain runs to 120 residues: Chaperonin GroEL (120 aa).

23–27 (DGTTT) contributes to the ATP binding site.

This sequence belongs to the chaperonin (HSP60) family. In terms of assembly, forms a cylinder of 14 subunits composed of two heptameric rings stacked back-to-back. Interacts with the co-chaperonin GroES.

The protein resides in the cytoplasm. The catalysed reaction is ATP + H2O + a folded polypeptide = ADP + phosphate + an unfolded polypeptide.. In terms of biological role, together with its co-chaperonin GroES, plays an essential role in assisting protein folding. The GroEL-GroES system forms a nano-cage that allows encapsulation of the non-native substrate proteins and provides a physical environment optimized to promote and accelerate protein folding. The sequence is that of Chaperonin GroEL from Mycolicibacterium chitae (Mycobacterium chitae).